Consider the following 431-residue polypeptide: Protein translocase subunit SecY 1 (431 aa).

10 helical membrane-spanning segments follow: residues 18-38 (IYFTLFILLLYRIGANITVPG), 67-87 (YSIFSLGVSPYITAQIVIQLL), 115-135 (YLTLVVAFVQSIGITLGFNAL), 150-170 (VEIAIIMTAGTMLLTWLGDEI), 178-198 (GVSVIIFAGIIARLPSGLYQI), 215-235 (ILFFIAVIVAILIVTQLVTWV), 268-288 (VIPVIFASSFIVTPATILMAF), 312-332 (GVIIYTLLIILFTFFYAFVQV), 365-385 (LIKLSTVGSIFLGLVALLPQL), and 392-412 (LPSSIGLGGTSLLIVIGVVLE).

It belongs to the SecY/SEC61-alpha family. As to quaternary structure, component of the Sec protein translocase complex. Heterotrimer consisting of SecY, SecE and SecG subunits. The heterotrimers can form oligomers, although 1 heterotrimer is thought to be able to translocate proteins. Interacts with the ribosome. Interacts with SecDF, and other proteins may be involved. Interacts with SecA.

It is found in the cell membrane. Functionally, the central subunit of the protein translocation channel SecYEG. Consists of two halves formed by TMs 1-5 and 6-10. These two domains form a lateral gate at the front which open onto the bilayer between TMs 2 and 7, and are clamped together by SecE at the back. The channel is closed by both a pore ring composed of hydrophobic SecY resides and a short helix (helix 2A) on the extracellular side of the membrane which forms a plug. The plug probably moves laterally to allow the channel to open. The ring and the pore may move independently. The sequence is that of Protein translocase subunit SecY 1 from Lactobacillus kefiranofaciens subsp. kefiranofaciens.